The following is a 936-amino-acid chain: General transcription factor II-I repeat domain-containing protein 2 (936 aa).

Residues 95–189 form a GTF2I-like 1 repeat; it reads EACPGEAQLL…FLGAESQLGG (95 aa). Positions 199-222 are disordered; it reads PTVPPNDSYGPVSVKTEPMEDSGT. Residues 319–413 form a GTF2I-like 2 repeat; it reads LSGLEKIKQL…LPGLELSNVG (95 aa).

Belongs to the TFII-I family. Ubiquitous.

The protein resides in the nucleus. This Mus musculus (Mouse) protein is General transcription factor II-I repeat domain-containing protein 2 (Gtf2ird2).